The following is a 498-amino-acid chain: ATP synthase subunit beta, chloroplastic (498 aa).

Position 172-179 (172-179) interacts with ATP; that stretch reads GGAGVGKT.

It belongs to the ATPase alpha/beta chains family. As to quaternary structure, F-type ATPases have 2 components, CF(1) - the catalytic core - and CF(0) - the membrane proton channel. CF(1) has five subunits: alpha(3), beta(3), gamma(1), delta(1), epsilon(1). CF(0) has four main subunits: a(1), b(1), b'(1) and c(9-12).

It localises to the plastid. The protein localises to the chloroplast thylakoid membrane. It catalyses the reaction ATP + H2O + 4 H(+)(in) = ADP + phosphate + 5 H(+)(out). Functionally, produces ATP from ADP in the presence of a proton gradient across the membrane. The catalytic sites are hosted primarily by the beta subunits. The sequence is that of ATP synthase subunit beta, chloroplastic from Salacca zalacca (Snake palm).